A 393-amino-acid polypeptide reads, in one-letter code: S-adenosylmethionine synthase 2 (393 aa).

E9 contributes to the Mg(2+) binding site. Position 15 (H15) interacts with ATP. Position 43 (E43) interacts with K(+). L-methionine is bound by residues E56 and Q99. Residues 167–169 (DGK), 235–238 (SGRF), D246, 252–253 (RK), A269, K273, and K277 contribute to the ATP site. D246 is a binding site for L-methionine. K277 provides a ligand contact to L-methionine.

The protein belongs to the AdoMet synthase family. As to quaternary structure, homotetramer. Mn(2+) serves as cofactor. The cofactor is Mg(2+). Co(2+) is required as a cofactor. It depends on K(+) as a cofactor.

It localises to the cytoplasm. The enzyme catalyses L-methionine + ATP + H2O = S-adenosyl-L-methionine + phosphate + diphosphate. Its pathway is amino-acid biosynthesis; S-adenosyl-L-methionine biosynthesis; S-adenosyl-L-methionine from L-methionine: step 1/1. Catalyzes the formation of S-adenosylmethionine from methionine and ATP. The reaction comprises two steps that are both catalyzed by the same enzyme: formation of S-adenosylmethionine (AdoMet) and triphosphate, and subsequent hydrolysis of the triphosphate. This chain is S-adenosylmethionine synthase 2 (METK2), found in Populus trichocarpa (Western balsam poplar).